Consider the following 306-residue polypeptide: Ornithine carbamoyltransferase 1, anabolic (306 aa).

Residues 53–56 (STRT), Q80, R104, and 131–134 (HPCQ) each bind carbamoyl phosphate. L-ornithine-binding positions include N162, D219, and 223–224 (SM). Residues 259–260 (CL) and R287 contribute to the carbamoyl phosphate site.

The protein belongs to the aspartate/ornithine carbamoyltransferase superfamily. OTCase family. Homotrimer.

It localises to the cytoplasm. The catalysed reaction is carbamoyl phosphate + L-ornithine = L-citrulline + phosphate + H(+). It participates in amino-acid biosynthesis; L-arginine biosynthesis; L-arginine from L-ornithine and carbamoyl phosphate: step 1/3. Reversibly inhibited by inhibited by phaseolotoxin and octicidine. In terms of biological role, reversibly catalyzes the transfer of the carbamoyl group from carbamoyl phosphate (CP) to the N(epsilon) atom of ornithine (ORN) to produce L-citrulline, which is a substrate for argininosuccinate synthetase, the enzyme involved in the final step in arginine biosynthesis. This chain is Ornithine carbamoyltransferase 1, anabolic, found in Pseudomonas savastanoi pv. phaseolicola (Pseudomonas syringae pv. phaseolicola).